The following is a 338-amino-acid chain: RNA 3'-terminal phosphate cyclase (338 aa).

ATP-binding positions include Gln103 and 283-287 (YLADQ). Catalysis depends on His308, which acts as the Tele-AMP-histidine intermediate.

This sequence belongs to the RNA 3'-terminal cyclase family. Type 1 subfamily.

It is found in the cytoplasm. It carries out the reaction a 3'-end 3'-phospho-ribonucleotide-RNA + ATP = a 3'-end 2',3'-cyclophospho-ribonucleotide-RNA + AMP + diphosphate. Catalyzes the conversion of 3'-phosphate to a 2',3'-cyclic phosphodiester at the end of RNA. The mechanism of action of the enzyme occurs in 3 steps: (A) adenylation of the enzyme by ATP; (B) transfer of adenylate to an RNA-N3'P to produce RNA-N3'PP5'A; (C) and attack of the adjacent 2'-hydroxyl on the 3'-phosphorus in the diester linkage to produce the cyclic end product. The biological role of this enzyme is unknown but it is likely to function in some aspects of cellular RNA processing. The protein is RNA 3'-terminal phosphate cyclase of Escherichia coli O6:K15:H31 (strain 536 / UPEC).